Consider the following 448-residue polypeptide: Phosphoglucosamine mutase (448 aa).

S102 (phosphoserine intermediate) is an active-site residue. 4 residues coordinate Mg(2+): S102, D243, D245, and D247. S102 bears the Phosphoserine mark.

The protein belongs to the phosphohexose mutase family. Mg(2+) is required as a cofactor. Post-translationally, activated by phosphorylation.

It catalyses the reaction alpha-D-glucosamine 1-phosphate = D-glucosamine 6-phosphate. Its function is as follows. Catalyzes the conversion of glucosamine-6-phosphate to glucosamine-1-phosphate. In Mycobacterium bovis (strain ATCC BAA-935 / AF2122/97), this protein is Phosphoglucosamine mutase.